The sequence spans 206 residues: Reticulon-like protein B13 (206 aa).

The Reticulon domain occupies 16-206; it reads VEDIYLWRRK…GTEEKVKKSE (191 aa). Helical transmembrane passes span 27–47, 50–70, and 134–154; these read LAFS…FYGF, ITIV…WGSL, and IGNL…GLTV.

It is found in the endoplasmic reticulum membrane. The protein is Reticulon-like protein B13 (RTNLB13) of Arabidopsis thaliana (Mouse-ear cress).